The chain runs to 312 residues: Glyoxylate/hydroxypyruvate reductase A (312 aa).

Arg227 is an active-site residue. The active-site Proton donor is His275.

This sequence belongs to the D-isomer specific 2-hydroxyacid dehydrogenase family. GhrA subfamily.

Its subcellular location is the cytoplasm. It carries out the reaction glycolate + NADP(+) = glyoxylate + NADPH + H(+). The enzyme catalyses (R)-glycerate + NAD(+) = 3-hydroxypyruvate + NADH + H(+). It catalyses the reaction (R)-glycerate + NADP(+) = 3-hydroxypyruvate + NADPH + H(+). Functionally, catalyzes the NADPH-dependent reduction of glyoxylate and hydroxypyruvate into glycolate and glycerate, respectively. This is Glyoxylate/hydroxypyruvate reductase A from Klebsiella pneumoniae (strain 342).